Reading from the N-terminus, the 333-residue chain is tRNA U34 carboxymethyltransferase (333 aa).

Carboxy-S-adenosyl-L-methionine contacts are provided by residues Lys97, Trp111, Lys116, Gly136, 158–160 (DPS), 189–190 (IE), Met205, Tyr209, and Arg324.

It belongs to the class I-like SAM-binding methyltransferase superfamily. CmoB family. Homotetramer.

The catalysed reaction is carboxy-S-adenosyl-L-methionine + 5-hydroxyuridine(34) in tRNA = 5-carboxymethoxyuridine(34) in tRNA + S-adenosyl-L-homocysteine + H(+). Functionally, catalyzes carboxymethyl transfer from carboxy-S-adenosyl-L-methionine (Cx-SAM) to 5-hydroxyuridine (ho5U) to form 5-carboxymethoxyuridine (cmo5U) at position 34 in tRNAs. This chain is tRNA U34 carboxymethyltransferase, found in Chromohalobacter salexigens (strain ATCC BAA-138 / DSM 3043 / CIP 106854 / NCIMB 13768 / 1H11).